A 497-amino-acid chain; its full sequence is tRNA (adenine(58)-N(1))-methyltransferase non-catalytic subunit TRM6 (497 aa).

2 disordered regions span residues 1-20 (MEGS…DHRI) and 69-100 (TSGG…IVDD). Residues 79-100 (KREEPTAETKEAGTDNRNIVDD) are compositionally biased toward basic and acidic residues. Residue 94–104 (NRNIVDDGKSQ) coordinates substrate. Thr107 is modified (phosphothreonine). Substrate is bound by residues 145-154 (KYIKKKKKKY) and 175-182 (REPGKINH). The segment at 276-354 (SSEPKDSALV…EKQRRQEEQR (79 aa)) is disordered. Phosphoserine occurs at positions 298 and 305. A compositionally biased stretch (basic and acidic residues) spans 327-354 (DPEHKGPKERGSKKDYIQEKQRRQEEQR). Substrate is bound by residues Arg349, Arg377, 415-423 (RERGGVINL), and 434-441 (QVLPDRSH). Positions 472 to 497 (SNASTLESHETEEPAAKKRKCPESDS) are disordered. Basic and acidic residues predominate over residues 478–497 (ESHETEEPAAKKRKCPESDS).

Belongs to the TRM6/GCD10 family. In terms of assembly, heterotetramer; composed of two copies of TRMT6 and two copies of TRMT61A. Expressed in brain, liver, testis and ovary.

The protein localises to the nucleus. Functionally, substrate-binding subunit of tRNA (adenine-N(1)-)-methyltransferase, which catalyzes the formation of N(1)-methyladenine at position 58 (m1A58) in initiator methionyl-tRNA. Together with the TRMT61A catalytic subunit, part of a mRNA N(1)-methyltransferase complex that mediates methylation of adenosine residues at the N(1) position of a small subset of mRNAs: N(1) methylation takes place in tRNA T-loop-like structures of mRNAs and is only present at low stoichiometries. The polypeptide is tRNA (adenine(58)-N(1))-methyltransferase non-catalytic subunit TRM6 (TRMT6) (Homo sapiens (Human)).